The primary structure comprises 154 residues: Putative pre-16S rRNA nuclease (154 aa).

Belongs to the YqgF nuclease family.

It localises to the cytoplasm. Functionally, could be a nuclease involved in processing of the 5'-end of pre-16S rRNA. The sequence is that of Putative pre-16S rRNA nuclease from Rickettsia conorii (strain ATCC VR-613 / Malish 7).